The following is a 121-amino-acid chain: Large ribosomal subunit protein bL20 (121 aa).

Belongs to the bacterial ribosomal protein bL20 family.

Functionally, binds directly to 23S ribosomal RNA and is necessary for the in vitro assembly process of the 50S ribosomal subunit. It is not involved in the protein synthesizing functions of that subunit. The sequence is that of Large ribosomal subunit protein bL20 (rplT) from Chlamydia pneumoniae (Chlamydophila pneumoniae).